A 226-amino-acid polypeptide reads, in one-letter code: MRFGIVVFPGSNCDIDCYYVLKDELQQEVEYIWHEEELKEGFDCIILPGGFSYGDYLRCGAVAQFSKVMEGVKVYAHAGGLVVGICNGFQILTEAGLLPGALVRNKGLKFICDTTPLKVTEANSPFTNQYQKGEVIQIPIAHGEGNYVVDEVTLAEMKTKGQILFTYGENPNGSTGDIAGICNEGKNVMGLMPHPERASEALLGNVDGKKFFQSIMHYLEGGKNND.

Residues 2 to 225 (RFGIVVFPGS…MHYLEGGKNN (224 aa)) form the Glutamine amidotransferase type-1 domain. Cysteine 86 (nucleophile) is an active-site residue. Active-site residues include histidine 194 and glutamate 196.

In terms of assembly, part of the FGAM synthase complex composed of 1 PurL, 1 PurQ and 2 PurS subunits.

The protein localises to the cytoplasm. It catalyses the reaction N(2)-formyl-N(1)-(5-phospho-beta-D-ribosyl)glycinamide + L-glutamine + ATP + H2O = 2-formamido-N(1)-(5-O-phospho-beta-D-ribosyl)acetamidine + L-glutamate + ADP + phosphate + H(+). The catalysed reaction is L-glutamine + H2O = L-glutamate + NH4(+). The protein operates within purine metabolism; IMP biosynthesis via de novo pathway; 5-amino-1-(5-phospho-D-ribosyl)imidazole from N(2)-formyl-N(1)-(5-phospho-D-ribosyl)glycinamide: step 1/2. Part of the phosphoribosylformylglycinamidine synthase complex involved in the purines biosynthetic pathway. Catalyzes the ATP-dependent conversion of formylglycinamide ribonucleotide (FGAR) and glutamine to yield formylglycinamidine ribonucleotide (FGAM) and glutamate. The FGAM synthase complex is composed of three subunits. PurQ produces an ammonia molecule by converting glutamine to glutamate. PurL transfers the ammonia molecule to FGAR to form FGAM in an ATP-dependent manner. PurS interacts with PurQ and PurL and is thought to assist in the transfer of the ammonia molecule from PurQ to PurL. The polypeptide is Phosphoribosylformylglycinamidine synthase subunit PurQ (Alkaliphilus metalliredigens (strain QYMF)).